A 297-amino-acid polypeptide reads, in one-letter code: Protease HtpX homolog (297 aa).

A run of 2 helical transmembrane segments spans residues Val14–Leu34 and Tyr39–Phe59. His143 provides a ligand contact to Zn(2+). Glu144 is a catalytic residue. A Zn(2+)-binding site is contributed by His147. The next 2 membrane-spanning stretches (helical) occupy residues Ile158 to Trp178 and Gly193 to Ala213. A Zn(2+)-binding site is contributed by Glu225.

Belongs to the peptidase M48B family. It depends on Zn(2+) as a cofactor.

The protein localises to the cell membrane. In Streptococcus equi subsp. equi (strain 4047), this protein is Protease HtpX homolog.